Reading from the N-terminus, the 321-residue chain is Oxidoreductase P35 (321 aa).

This sequence belongs to the Gfo/Idh/MocA family.

It is found in the cell surface. In terms of biological role, oxidoreductase that may be involved in ulvan degradation. Ulvan is the main polysaccharide component of the Ulvales (green seaweed) cell wall. It is composed of disaccharide building blocks comprising 3-sulfated rhamnose (Rha3S) linked to D-glucuronic acid (GlcA), L-iduronic acid (IduA), or D-xylose (Xyl). The sequence is that of Oxidoreductase P35 from Formosa agariphila (strain DSM 15362 / KCTC 12365 / LMG 23005 / KMM 3901 / M-2Alg 35-1).